Here is a 63-residue protein sequence, read N- to C-terminus: Large ribosomal subunit protein bL28 (63 aa).

This sequence belongs to the bacterial ribosomal protein bL28 family.

This Brachyspira hyodysenteriae (strain ATCC 49526 / WA1) protein is Large ribosomal subunit protein bL28.